The following is a 487-amino-acid chain: Protein nucleotidyltransferase YdiU (487 aa).

G90, G92, R93, K113, D125, G126, R176, and R183 together coordinate ATP. The active-site Proton acceptor is D252. N253 and D262 together coordinate Mg(2+). An ATP-binding site is contributed by D262.

The protein belongs to the SELO family. Requires Mg(2+) as cofactor. The cofactor is Mn(2+).

The enzyme catalyses L-seryl-[protein] + ATP = 3-O-(5'-adenylyl)-L-seryl-[protein] + diphosphate. It catalyses the reaction L-threonyl-[protein] + ATP = 3-O-(5'-adenylyl)-L-threonyl-[protein] + diphosphate. The catalysed reaction is L-tyrosyl-[protein] + ATP = O-(5'-adenylyl)-L-tyrosyl-[protein] + diphosphate. It carries out the reaction L-histidyl-[protein] + UTP = N(tele)-(5'-uridylyl)-L-histidyl-[protein] + diphosphate. The enzyme catalyses L-seryl-[protein] + UTP = O-(5'-uridylyl)-L-seryl-[protein] + diphosphate. It catalyses the reaction L-tyrosyl-[protein] + UTP = O-(5'-uridylyl)-L-tyrosyl-[protein] + diphosphate. In terms of biological role, nucleotidyltransferase involved in the post-translational modification of proteins. It can catalyze the addition of adenosine monophosphate (AMP) or uridine monophosphate (UMP) to a protein, resulting in modifications known as AMPylation and UMPylation. The protein is Protein nucleotidyltransferase YdiU of Ectopseudomonas mendocina (strain ymp) (Pseudomonas mendocina).